The following is a 436-amino-acid chain: Prenyltransferase nscD (436 aa).

The protein belongs to the tryptophan dimethylallyltransferase family.

It participates in secondary metabolite biosynthesis. Prenyltransferase; part of the gene cluster that mediates the biosynthesis of neosartoricin B, a prenylated anthracenone that probably exhibits T-cell antiproliferative activity, suggestive of a physiological role as an immunosuppressive agent. The non-reducing polyketide synthase nscA probably synthesizes and cyclizes the decaketide backbone. The hydrolase nscB then mediates the product release through hydrolysis followed by spontaneous decarboxylation. The prenyltransferase nscD catalyzes the addition of the dimethylallyl group to the aromatic C5. The FAD-dependent monooxygenase nscC is then responsible for the stereospecific hydroxylation at C2. Neosartoricin B can be converted into two additional compounds neosartoricins C and D. Neosartoricin C is a spirocyclic compound that is cyclized through the attack of C3 hydroxyl on C14, followed by dehydration. On the other hand, neosartoricin D is a further cyclized compound in which attack of C2 on C14 in neosartoricin C results in the formation of the acetal-containing dioxabicyclo-octanone ring. Both of these compounds are novel and possibly represent related metabolites of the gene cluster. This is Prenyltransferase nscD from Arthroderma gypseum (strain ATCC MYA-4604 / CBS 118893) (Microsporum gypseum).